A 494-amino-acid polypeptide reads, in one-letter code: MAQTKRSRDESEKEEVVVKADVESSDVDHSFKSLNLSQPTMRAIEKMGFSKMTPVQARTIPPLMAGRDVLGAAKTGSGKTLAFLLPTIELLHSLKFKPRNGTGVIIITPTRELALQIFGVVRELMEFHSQTFGIVIGGANRRQEAEKLMKGVNLLVATPGRLLDHLQNTKGFIFKNLKALVIDEADRILEIGFEDEMRQIIKILPNEDRQSMLFSATQTTKVEDLSRISLRPGPLFINVVSEHDSSTADGLEQGYVVCESDKRFLLLFSFLKRNQKKKIIVFLSSCNSVKYYAELLNYIDLPVLELHGKQKQQKRTNTFFEFCNAERGILICTDVAARGLDIPAVDWIIQFDPPDDPRDYIHRVGRTARGTNGKGKSLMFLIPNELGFLRYLKAAKVPLNEYEFPTNKIANVQSQLEKLIKSNYYLHQTAKDGYRSYLQAYASHSLKTVYQIDKLDLAKVAKSYGFPVPPKVNITIGASGKTPTVVKKRKTHKH.

Residues 1–23 (MAQTKRSRDESEKEEVVVKADVE) are disordered. Residues 29–57 (HSFKSLNLSQPTMRAIEKMGFSKMTPVQA) carry the Q motif motif. Residues 60–236 (IPPLMAGRDV…RISLRPGPLF (177 aa)) form the Helicase ATP-binding domain. 73 to 80 (AKTGSGKT) is an ATP binding site. Positions 183-186 (DEAD) match the DEAD box motif. The 171-residue stretch at 250–420 (GLEQGYVVCE…NVQSQLEKLI (171 aa)) folds into the Helicase C-terminal domain. Residues 262 to 278 (KRFLLLFSFLKRNQKKK) carry the Bipartite nuclear localization signal motif.

It belongs to the DEAD box helicase family. DDX18/HAS1 subfamily. Associates in the nucleolus with the 60S and pre-60S ribosomal subunits.

It localises to the nucleus. Its subcellular location is the nucleolus. It catalyses the reaction ATP + H2O = ADP + phosphate + H(+). In terms of biological role, ATP-dependent RNA helicase involved in 40S ribosomal subunit biogenesis. Required for the processing and cleavage of 35S pre-rRNA at sites A0, A1, and A2, leading to mature 18S rRNA. The chain is ATP-dependent RNA helicase HAS1 (HAS1) from Candida glabrata (strain ATCC 2001 / BCRC 20586 / JCM 3761 / NBRC 0622 / NRRL Y-65 / CBS 138) (Yeast).